Reading from the N-terminus, the 389-residue chain is Putative zinc finger CCCH domain-containing protein 10 (389 aa).

Polar residues predominate over residues 1–11 (MANVSFTFDSQ). Residues 1–110 (MANVSFTFDS…QDRRGSESRM (110 aa)) form a disordered region. 2 stretches are compositionally biased toward basic and acidic residues: residues 12 to 52 (EQNK…RVSE) and 86 to 110 (RSHE…ESRM). C3H1-type zinc fingers lie at residues 131–157 (RPGE…YNHP) and 158–190 (PLQE…HPKE). Positions 183-296 (CPFNHPKERD…ATATGKVSGK (114 aa)) are disordered. Basic and acidic residues-rich tracts occupy residues 204 to 243 (PDLR…KEDA) and 251 to 284 (RPRD…RSSR).

This Arabidopsis thaliana (Mouse-ear cress) protein is Putative zinc finger CCCH domain-containing protein 10.